Consider the following 321-residue polypeptide: Leucine-rich repeat-containing protein 46 (321 aa).

4 LRR repeats span residues 45–66, 67–88, 89–110, and 111–132; these read ELQT…EGLQ, NLHS…ACIP, SLRF…LDLP, and CLQF…EFPQ. Residues 142-184 enclose the LRRCT domain; the sequence is NSCTNQDGYRELVTEALPLLLDLDGQPVVERWISDEEDEASSD. Phosphoserine is present on residues Ser175 and Ser182. The stretch at 201-221 forms a coiled coil; that stretch reads LKELEQELSRHREHRQQTALT. Residues 235–321 are disordered; that stretch reads DLPLLPGVPM…TKTTAKRSKK (87 aa).

It localises to the cell projection. The protein resides in the cilium. It is found in the flagellum. Its function is as follows. Required for normal spermatogenesis and male fertility. Plays an important role in sperm flagellum biogenesis. The polypeptide is Leucine-rich repeat-containing protein 46 (LRRC46) (Homo sapiens (Human)).